We begin with the raw amino-acid sequence, 140 residues long: L-fucose mutarotase (140 aa).

The Proton donor role is filled by His-22. Substrate-binding positions include Asp-30, Arg-107, and 129–131; that span reads YGN.

The protein belongs to the RbsD / FucU family. FucU mutarotase subfamily. In terms of assembly, homodecamer.

The protein localises to the cytoplasm. The catalysed reaction is alpha-L-fucose = beta-L-fucose. It participates in carbohydrate metabolism; L-fucose metabolism. In terms of biological role, involved in the anomeric conversion of L-fucose. In Citrobacter koseri (strain ATCC BAA-895 / CDC 4225-83 / SGSC4696), this protein is L-fucose mutarotase.